The sequence spans 273 residues: Large ribosomal subunit protein uL2 (273 aa).

Disordered regions lie at residues 30–50 (YAPL…GRIT) and 221–273 (RGTA…RRGK). The span at 253–273 (KGKKTRHNKRTDKFIVRRRGK) shows a compositional bias: basic residues.

It belongs to the universal ribosomal protein uL2 family. As to quaternary structure, part of the 50S ribosomal subunit. Forms a bridge to the 30S subunit in the 70S ribosome.

In terms of biological role, one of the primary rRNA binding proteins. Required for association of the 30S and 50S subunits to form the 70S ribosome, for tRNA binding and peptide bond formation. It has been suggested to have peptidyltransferase activity; this is somewhat controversial. Makes several contacts with the 16S rRNA in the 70S ribosome. The chain is Large ribosomal subunit protein uL2 from Pasteurella multocida (strain Pm70).